The primary structure comprises 349 residues: Isopentenyl-diphosphate delta-isomerase (349 aa).

6–7 (RK) contacts substrate. FMN contacts are provided by residues 62 to 64 (AMT), serine 93, and asparagine 122. Position 152 (glutamine 152) interacts with substrate. A Mg(2+)-binding site is contributed by glutamate 153. Residues lysine 184, threonine 214, 258-259 (GG), and 280-281 (AG) each bind FMN.

This sequence belongs to the IPP isomerase type 2 family. In terms of assembly, homooctamer. Dimer of tetramers. FMN is required as a cofactor. The cofactor is NADPH. Requires Mg(2+) as cofactor.

Its subcellular location is the cytoplasm. The enzyme catalyses isopentenyl diphosphate = dimethylallyl diphosphate. Its function is as follows. Involved in the biosynthesis of isoprenoids. Catalyzes the 1,3-allylic rearrangement of the homoallylic substrate isopentenyl (IPP) to its allylic isomer, dimethylallyl diphosphate (DMAPP). In Bacillus mycoides (strain KBAB4) (Bacillus weihenstephanensis), this protein is Isopentenyl-diphosphate delta-isomerase.